The chain runs to 133 residues: Peptide methionine sulfoxide reductase MsrB (133 aa).

Residues 1 to 12 (MSEKVQKSEHEW) show a composition bias toward basic and acidic residues. Residues 1–36 (MSEKVQKSEHEWQQQLTPEQYRVTREKGTERPFTGD) form a disordered region. One can recognise a MsrB domain in the interval 9-132 (EHEWQQQLTP…NSVSLDFHPG (124 aa)). Cysteine 48, cysteine 51, cysteine 97, and cysteine 100 together coordinate Zn(2+). Cysteine 121 serves as the catalytic Nucleophile.

The protein belongs to the MsrB Met sulfoxide reductase family. The cofactor is Zn(2+).

It carries out the reaction L-methionyl-[protein] + [thioredoxin]-disulfide + H2O = L-methionyl-(R)-S-oxide-[protein] + [thioredoxin]-dithiol. This is Peptide methionine sulfoxide reductase MsrB from Chromohalobacter salexigens (strain ATCC BAA-138 / DSM 3043 / CIP 106854 / NCIMB 13768 / 1H11).